The sequence spans 427 residues: Glutamate-1-semialdehyde 2,1-aminomutase (427 aa).

At K265 the chain carries N6-(pyridoxal phosphate)lysine.

The protein belongs to the class-III pyridoxal-phosphate-dependent aminotransferase family. HemL subfamily. As to quaternary structure, homodimer. The cofactor is pyridoxal 5'-phosphate.

Its subcellular location is the cytoplasm. The catalysed reaction is (S)-4-amino-5-oxopentanoate = 5-aminolevulinate. It functions in the pathway porphyrin-containing compound metabolism; protoporphyrin-IX biosynthesis; 5-aminolevulinate from L-glutamyl-tRNA(Glu): step 2/2. In Burkholderia cenocepacia (strain ATCC BAA-245 / DSM 16553 / LMG 16656 / NCTC 13227 / J2315 / CF5610) (Burkholderia cepacia (strain J2315)), this protein is Glutamate-1-semialdehyde 2,1-aminomutase.